The sequence spans 158 residues: Glycine/sarcosine/betaine reductase complex component A (158 aa).

U44 is a catalytic residue. Position 44 (U44) is a non-standard amino acid, selenocysteine.

It belongs to the GrdA family. In terms of assembly, monomer. Component of the glycine, sarcosine and betaine reductase complexes, together with components B and C.

It catalyses the reaction acetyl phosphate + [thioredoxin]-disulfide + NH4(+) + H2O = [thioredoxin]-dithiol + glycine + phosphate + H(+). The enzyme catalyses acetyl phosphate + methylamine + [thioredoxin]-disulfide + H2O = sarcosine + [thioredoxin]-dithiol + phosphate + H(+). The catalysed reaction is acetyl phosphate + trimethylamine + [thioredoxin]-disulfide + H2O = glycine betaine + [thioredoxin]-dithiol + phosphate + H(+). Functionally, in the first step of glycine, betaine and sarcosine reductases, the substrate is bound to component PB via a Schiff base intermediate. Then the PB-activated substrate is nucleophilically attacked by the selenol anion of component PA to transform it to a carboxymethylated selenoether and the respective amine. By action of component PC, acetyl phosphate is formed, leaving component PA in its oxidized state. Finally component PA becomes reduced by the thioredoxin system to start a new catalytic cycle of reductive deamination. This chain is Glycine/sarcosine/betaine reductase complex component A, found in Clostridium botulinum (strain ATCC 19397 / Type A).